Here is a 72-residue protein sequence, read N- to C-terminus: Translation initiation factor IF-1 (72 aa).

One can recognise an S1-like domain in the interval 1 to 72; the sequence is MAKEEAITVD…SKGRITYRKK (72 aa).

This sequence belongs to the IF-1 family. In terms of assembly, component of the 30S ribosomal translation pre-initiation complex which assembles on the 30S ribosome in the order IF-2 and IF-3, IF-1 and N-formylmethionyl-tRNA(fMet); mRNA recruitment can occur at any time during PIC assembly.

The protein localises to the cytoplasm. Functionally, one of the essential components for the initiation of protein synthesis. Stabilizes the binding of IF-2 and IF-3 on the 30S subunit to which N-formylmethionyl-tRNA(fMet) subsequently binds. Helps modulate mRNA selection, yielding the 30S pre-initiation complex (PIC). Upon addition of the 50S ribosomal subunit IF-1, IF-2 and IF-3 are released leaving the mature 70S translation initiation complex. This chain is Translation initiation factor IF-1, found in Leptospira borgpetersenii serovar Hardjo-bovis (strain L550).